The chain runs to 391 residues: MNIKRNQNNSIDNNLSIDSNPSPIKKVKNHLDFSKSYNEDDEPSNDLDLSFNTSNISNLSNINGEEDNDDDDRENEPKDIDNPNPSITTTTATSTNSTLVKKTNNFLDFNFAFEPNKEEDDEEEDLNISLTTEDILLSQIELLKAEWDYITYNKSPPLVLQSVYHQSNKDSERSIQILKKKGTIRLFQIATSLNDYCIIITTDYIKNIELLKIENTTIPNKIKPETLTNNMKNSSPIKSAPIDTILLKRSEILDLFIKKLIPNFNEVSITRSKLFQLLSIVNDDHHQQENIITHLVQCGLLLQKDDCTFTFSVPGAGGFFLNLMKGRKEILSNIQRLKYKEILKKDLLKKKLKYSNVQMQLLIKDLLGLNKIKIIPTTQGELIRCVQFDEL.

Composition is skewed to low complexity over residues 1–24 and 49–63; these read MNIKRNQNNSIDNNLSIDSNPSPI and LSFNTSNISNLSNIN. A disordered region spans residues 1 to 95; it reads MNIKRNQNNS…SITTTTATST (95 aa). Residues 64 to 74 show a composition bias toward acidic residues; it reads GEEDNDDDDRE. Positions 82 to 95 are enriched in low complexity; that stretch reads NPNPSITTTTATST.

It belongs to the STK19 family.

The protein resides in the nucleus. DNA-binding protein which is required for efficient transcription-coupled nucleotide excision repair. This chain is Winged helix repair factor 1, found in Dictyostelium discoideum (Social amoeba).